The sequence spans 314 residues: Taste receptor type 2 member 42 (314 aa).

The Extracellular segment spans residues 1-7 (MATELDK). The chain crosses the membrane as a helical span at residues 8–28 (IFLILEIAEFIIGMLGNVFIG). The Cytoplasmic portion of the chain corresponds to 29 to 50 (LVNCSEGIKNQKVFSADFILTC). The chain crosses the membrane as a helical span at residues 51-71 (LAISTIGQLFVILFDSFLVGL). The Extracellular segment spans residues 72–101 (ASHLYTTYRLGKPVIMLWHMTNHLTTWLAT). Residues 102-122 (CLSIFYFFKIAHFPHSLFLWL) form a helical membrane-spanning segment. Over 123 to 127 (RWRMN) the chain is Cytoplasmic. A helical transmembrane segment spans residues 128 to 148 (GMIVMLLILSLFLLIFDSLVL). The Extracellular segment spans residues 149–187 (EIFIDISLNIIDKSNLTLYLDESKTLYDKLSILKTLLSL). N-linked (GlcNAc...) asparagine glycosylation is present at Asn163. Residues 188 to 208 (TSFIPFSLSLTSLLFFFLSLV) form a helical membrane-spanning segment. Residues 209 to 238 (RHTRNLKLSSLGSRDSSTEAHRRAMKMVMS) lie on the Cytoplasmic side of the membrane. The helical transmembrane segment at 239–259 (FLFLFIVHFFSLQVANWIFFM) threads the bilayer. At 260 to 265 (LWNNKY) the chain is on the extracellular side. Residues 266–286 (IKFAMLALNAFPSCHSFILIL) form a helical membrane-spanning segment. Over 287–314 (GNSKLRQTAVRLLWHLRNYTKTPNALPL) the chain is Cytoplasmic.

Belongs to the G-protein coupled receptor T2R family.

Its subcellular location is the membrane. In terms of biological role, receptor that may play a role in the perception of bitterness and is gustducin-linked. May play a role in sensing the chemical composition of the gastrointestinal content. The activity of this receptor may stimulate alpha gustducin, mediate PLC-beta-2 activation and lead to the gating of TRPM5. The protein is Taste receptor type 2 member 42 (TAS2R42) of Pan paniscus (Pygmy chimpanzee).